The chain runs to 389 residues: NADH-dependent butanol dehydrogenase A (389 aa).

The protein belongs to the iron-containing alcohol dehydrogenase family. As to quaternary structure, homodimer.

It functions in the pathway alcohol metabolism; butanol biosynthesis. This chain is NADH-dependent butanol dehydrogenase A (bdhA), found in Clostridium acetobutylicum (strain ATCC 824 / DSM 792 / JCM 1419 / IAM 19013 / LMG 5710 / NBRC 13948 / NRRL B-527 / VKM B-1787 / 2291 / W).